Here is a 178-residue protein sequence, read N- to C-terminus: Interleukin-10 (178 aa).

Positions 1–18 are cleaved as a signal peptide; that stretch reads MPRSALLCCLILLAGVAA. 2 disulfide bridges follow: Cys-30–Cys-126 and Cys-80–Cys-132. Asn-134 is a glycosylation site (N-linked (GlcNAc...) asparagine).

It belongs to the IL-10 family. As to quaternary structure, homodimer. Interacts with IL10RA and IL10RB.

The protein resides in the secreted. Major immune regulatory cytokine that acts on many cells of the immune system where it has profound anti-inflammatory functions, limiting excessive tissue disruption caused by inflammation. Mechanistically, IL10 binds to its heterotetrameric receptor comprising IL10RA and IL10RB leading to JAK1 and STAT2-mediated phosphorylation of STAT3. In turn, STAT3 translocates to the nucleus where it drives expression of anti-inflammatory mediators. Targets antigen-presenting cells (APCs) such as macrophages and monocytes and inhibits their release of pro-inflammatory cytokines including granulocyte-macrophage colony-stimulating factor /GM-CSF, granulocyte colony-stimulating factor/G-CSF, IL-1 alpha, IL-1 beta, IL-6, IL-8 and TNF-alpha. Also interferes with antigen presentation by reducing the expression of MHC-class II and co-stimulatory molecules, thereby inhibiting their ability to induce T cell activation. In addition, controls the inflammatory response of macrophages by reprogramming essential metabolic pathways including mTOR signaling. This is Interleukin-10 (IL10) from Lama glama (Llama).